Consider the following 142-residue polypeptide: Hemoglobin subunit alpha (142 aa).

A Globin domain is found at valine 2–arginine 142. Serine 4 is subject to Phosphoserine. Lysine 8 and lysine 12 each carry N6-succinyllysine. Lysine 17 carries the N6-acetyllysine; alternate modification. N6-succinyllysine; alternate is present on lysine 17. Tyrosine 25 bears the Phosphotyrosine mark. Serine 36 carries the phosphoserine modification. An N6-succinyllysine modification is found at lysine 41. Phosphoserine is present on serine 50. Histidine 59 is a binding site for O2. Histidine 88 is a heme b binding site. Position 103 is a phosphoserine (serine 103). The residue at position 109 (threonine 109) is a Phosphothreonine. Serine 125 carries the phosphoserine modification. Phosphothreonine occurs at positions 135 and 138. Serine 139 carries the phosphoserine modification.

This sequence belongs to the globin family. As to quaternary structure, heterotetramer of two alpha chains and two beta chains. In terms of tissue distribution, red blood cells.

In terms of biological role, involved in oxygen transport from the lung to the various peripheral tissues. Its function is as follows. Hemopressin acts as an antagonist peptide of the cannabinoid receptor CNR1. Hemopressin-binding efficiently blocks cannabinoid receptor CNR1 and subsequent signaling. The protein is Hemoglobin subunit alpha (HBA) of Bos gaurus frontalis (Domestic gayal).